A 195-amino-acid chain; its full sequence is dITP/XTP pyrophosphatase (195 aa).

Residue 8–13 (SNNQGK) participates in substrate binding. Mg(2+)-binding residues include Glu39 and Asp68. The Proton acceptor role is filled by Asp68. Substrate-binding positions include Ser69, 149–152 (FGYD), Lys172, and 177–178 (HR).

The protein belongs to the HAM1 NTPase family. Homodimer. Mg(2+) serves as cofactor.

The catalysed reaction is XTP + H2O = XMP + diphosphate + H(+). The enzyme catalyses dITP + H2O = dIMP + diphosphate + H(+). It catalyses the reaction ITP + H2O = IMP + diphosphate + H(+). Its function is as follows. Pyrophosphatase that catalyzes the hydrolysis of nucleoside triphosphates to their monophosphate derivatives, with a high preference for the non-canonical purine nucleotides XTP (xanthosine triphosphate), dITP (deoxyinosine triphosphate) and ITP. Seems to function as a house-cleaning enzyme that removes non-canonical purine nucleotides from the nucleotide pool, thus preventing their incorporation into DNA/RNA and avoiding chromosomal lesions. This chain is dITP/XTP pyrophosphatase, found in Staphylococcus aureus (strain MRSA252).